We begin with the raw amino-acid sequence, 684 residues long: Poly(A) RNA polymerase cid14 (684 aa).

Disordered regions lie at residues 1-52 (MGKK…DAYD), 64-127 (DQEE…KRGE), and 161-219 (WNSD…QAYE). 5 stretches are compositionally biased toward basic and acidic residues: residues 19-35 (ERTE…DKPS), 73-91 (GSKK…DKGG), 108-127 (DPLE…KRGE), 171-186 (SNDK…KSSK), and 199-210 (FFHEANEKSDSN). Mg(2+) contacts are provided by Asp-298 and Asp-300. Positions 364, 389, 407, 408, 492, and 496 each coordinate ATP. The 59-residue stretch at 434–492 (NFGVLLLEFLELYGKQFYYDAVGIAVHNGGFYFSKKKMGWLKPNQPYLLSIQDPVDFQN) folds into the PAP-associated domain. The disordered stretch occupies residues 623 to 684 (GHENFQKQAL…SRAKKIRKRF (62 aa)). Positions 628 to 655 (QKQALTSTGEQSSSNSRANPSKLFNISS) are enriched in polar residues. Positions 656-672 (DDSEDEVPIIEDTTASD) are enriched in acidic residues.

Belongs to the DNA polymerase type-B-like family. In terms of assembly, heterooligomer. Component of the TRAMP complex composed of at least cid14, mtr4, and air1. It depends on Mg(2+) as a cofactor. Mn(2+) is required as a cofactor.

It is found in the nucleus. The protein resides in the nucleolus. The enzyme catalyses RNA(n) + ATP = RNA(n)-3'-adenine ribonucleotide + diphosphate. Required for 3' polyadenylation of the 5.8S and 25S rRNAs as a prelude to their degradation in the exosome. Involved in the nucleolar organization to ensure faithful chromosome segregation during mitosis. This chain is Poly(A) RNA polymerase cid14 (cid14), found in Schizosaccharomyces pombe (strain 972 / ATCC 24843) (Fission yeast).